The primary structure comprises 461 residues: UDP-N-acetylmuramate--L-alanine ligase (461 aa).

111 to 117 (GAHGKTT) serves as a coordination point for ATP.

Belongs to the MurCDEF family.

It localises to the cytoplasm. It catalyses the reaction UDP-N-acetyl-alpha-D-muramate + L-alanine + ATP = UDP-N-acetyl-alpha-D-muramoyl-L-alanine + ADP + phosphate + H(+). Its pathway is cell wall biogenesis; peptidoglycan biosynthesis. Its function is as follows. Cell wall formation. This chain is UDP-N-acetylmuramate--L-alanine ligase, found in Pelotomaculum thermopropionicum (strain DSM 13744 / JCM 10971 / SI).